Here is a 495-residue protein sequence, read N- to C-terminus: Flagellin (495 aa).

This sequence belongs to the bacterial flagellin family.

The protein resides in the secreted. It is found in the bacterial flagellum. Its function is as follows. Flagellin is the subunit protein which polymerizes to form the filaments of bacterial flagella. This Salmonella typhimurium (strain LT2 / SGSC1412 / ATCC 700720) protein is Flagellin (fliC).